A 356-amino-acid chain; its full sequence is MNKILFYFFFFLTLILSATVYLFGGPMMLFFINYKTDLLKVDDVYNHEIYSNQSAAIPKIIHQTWKTNEIPEKWVGAQKSCIDLHPDYEYVLWTDESMREFIATDYPWFLTQYDSYPYNIERADVVRYFILYKYGGIYLDLDVGCNRTLDPLLHYPAWVRRTSPSGISNNVMGFAKGHPFLLQVVRNLPRFAFNYHFPYLTVMYSTGPLFLSIIWSAWRKLPDAEAWHHIWVMVPELYEKSHHAFFEIYEGSSWHDSDAGFVFYMLHHWAIFTFLGFLTFFIVVYFIFGYALKPAARVSRTGRRVFSSPFSKTSPSRWKIFHRFTSSNEKYDQTRSDSLPFMSDYDLESQTQSHSP.

Residues 4–24 (ILFYFFFFLTLILSATVYLFG) traverse the membrane as a helical segment. Asn52 and Asn146 each carry an N-linked (GlcNAc...) asparagine glycan. Transmembrane regions (helical) follow at residues 197-217 (FPYLTVMYSTGPLFLSIIWSA) and 269-289 (WAIFTFLGFLTFFIVVYFIFG). Ser307, Ser353, and Ser355 each carry phosphoserine.

The protein belongs to the glycosyltransferase 32 family.

The protein resides in the endoplasmic reticulum membrane. Its subcellular location is the golgi apparatus. It localises to the cis-Golgi network membrane. The protein localises to the trans-Golgi network membrane. Functionally, with imt1 and imt2, is required for the synthesis of mannosylinositol phosphoceramide (MIPC). Catalyzes the addition of mannosyl to inositol phosphoceramide (IPC). MIPC is essential for cell morphology, cell-surface distribution of ergosterol, localization for plasma-membrane transporters, and lipid-raft-mediated endocytosis of plasma membrane proteins to the vacuole. This is Inositol phosphoceramide mannosyltransferase 3 from Schizosaccharomyces pombe (strain 972 / ATCC 24843) (Fission yeast).